Consider the following 579-residue polypeptide: MSLFTRPFLRSPRQFSVARYVYWARSPALRSNLRIPSIAAASLRAYSNESKTGRDAPPDKKSKKLSNLKYITERDSLLVQTNNIFTKLKINIRWFLKKSTRPFNSDDISAFISWILVSNIFIFIFWTTTFVSLILYLINTVFAQEYLASKIGKFITKNESLSIVFESAIVPDWSSGKISFQKVFVSRRPKVSRGFTKGSQQDALQRAKLALSERILVNQQDFDNGNYTQFDLTIDQVDISLNFRKWINGKGILDEVTINGLRGVIDRTHVVWKKDDDPKNYLNVYQPGDFEISKFTMNDVLCTLYQPNGFRPFQVSIFNCDLPQLRKHWLFYDILNANNINGTYDNSMFTIHKKFRTDDQHQDPTLLWKQMTRFRVDNLDIDHLNAGIEGPFGWINEGRVNMIGDVLLPDDDAASDSLQLTEILTEIGDRLIKKAKRYTSSLPLVGPGFSPAVDEIDPNDYFIMDFSLRLYNVKAEVPLFTSGLTYINSALIRPIVGYINSHRTYIPIKCRIVKKKSDFEGSWTIYDSYLMRDLSAEAYDAFADYVADDEKRTLRLRRVGFWSLQLILQVILMSLGAIA.

The N-terminal 47 residues, 1–47, are a transit peptide targeting the mitochondrion; sequence MSLFTRPFLRSPRQFSVARYVYWARSPALRSNLRIPSIAAASLRAYS. Topologically, residues 48–114 are mitochondrial matrix; it reads NESKTGRDAP…SDDISAFISW (67 aa). A helical membrane pass occupies residues 115 to 135; sequence ILVSNIFIFIFWTTTFVSLIL. The Mitochondrial intermembrane portion of the chain corresponds to 136–558; that stretch reads YLINTVFAQE…DEKRTLRLRR (423 aa). The chain crosses the membrane as a helical span at residues 559-578; that stretch reads VGFWSLQLILQVILMSLGAI. A topological domain (mitochondrial matrix) is located at residue alanine 579.

This sequence belongs to the MDM31/MDM32 family. As to quaternary structure, interacts with MDM32. Participates in a complex of about 600 kDa.

The protein localises to the mitochondrion inner membrane. Functionally, involved in the organization of the mitochondrial membranes and the global structure of the mitochondria. Also required for mitochondrial distribution and mobility as well as for the maintenance of mitochondrial DNA nucleoids structures. This chain is Mitochondrial distribution and morphology protein 31 (MDM31), found in Saccharomyces cerevisiae (strain ATCC 204508 / S288c) (Baker's yeast).